A 2019-amino-acid chain; its full sequence is Sodium channel protein type 5 subunit alpha (2019 aa).

The Cytoplasmic segment spans residues 1–129 (MANFLLPRGT…VRRAAVKILV (129 aa)). Positions 27 to 66 (RMAEKQARGSATSQESREGLPEEEAPRPQLDLQASKKLPD) are disordered. At Ser36 the chain carries Phosphoserine. Thr38 carries the phosphothreonine modification. The segment covering 41 to 52 (ESREGLPEEEAP) has biased composition (basic and acidic residues). Residues 113–420 (VLSPFHPVRR…VVAMAYEEQN (308 aa)) form an I repeat. A helical membrane pass occupies residues 130-149 (HSLFSMLIMCTILTNCVFMA). Residues 150–157 (QHDPPPWT) are Extracellular-facing. A helical transmembrane segment spans residues 158–179 (KYVEYTFTAIYTFESLVKILAR). Topologically, residues 180-188 (GFCLHAFTF) are cytoplasmic. The chain crosses the membrane as a helical span at residues 189–209 (LRDPWNWLDFSVIVMAYTTEF). The Extracellular portion of the chain corresponds to 210 to 216 (VDLGNVS). Asn214 carries N-linked (GlcNAc...) asparagine glycosylation. A helical transmembrane segment spans residues 217–236 (ALRTFRVLRALKTISVISGL). The Cytoplasmic portion of the chain corresponds to 237 to 249 (KTIVGALIQSVKK). The helical transmembrane segment at 250–272 (LADVMVLTVFCLSVFALIGLQLF) threads the bilayer. The Extracellular segment spans residues 273-357 (MGNLRHKCVR…PDHGYTSFDS (85 aa)). Cys280 and Cys335 are disulfide-bonded. Asn283, Asn288, Asn291, Asn318, and Asn328 each carry an N-linked (GlcNAc...) asparagine glycan. Residues 358-378 (FAWAFLALFRLMTQDCWERLY) constitute an intramembrane region (pore-forming). Topologically, residues 379–386 (QQTLRSAG) are extracellular. The helical transmembrane segment at 387–413 (KIYMIFFMLVIFLGSFYLVNLILAVVA) threads the bilayer. Over 414–719 (MAYEEQNQAT…VKFVVMDPFA (306 aa)) the chain is Cytoplasmic. 4 positions are modified to phosphoserine: Ser457, Ser460, Ser483, and Ser484. Disordered regions lie at residues 461-575 (LEMS…TQGQ) and 610-647 (EATS…TPQA). The residue at position 486 (Thr486) is a Phosphothreonine. The segment covering 491-503 (DDRLPKSDSEDGP) has biased composition (basic and acidic residues). Phosphoserine occurs at positions 497 and 510. The segment covering 507-528 (NQLSLTHGLSRTSMRPRSSRGS) has biased composition (polar residues). The residue at position 526 (Arg526) is a Dimethylated arginine; alternate. Arg526 carries the omega-N-methylarginine; alternate modification. Residues Ser539 and Ser571 each carry the phosphoserine modification. 2 positions are modified to phosphoserine: Ser664 and Ser667. One copy of the II repeat lies at 699–971 (CCPLWMSIKQ…QLALARIQRG (273 aa)). Residues 720-737 (DLTITMCIVLNTLFMALE) form a helical membrane-spanning segment. The Extracellular portion of the chain corresponds to 738–746 (HYNMTAEFE). N-linked (GlcNAc...) asparagine glycosylation occurs at Asn740. The chain crosses the membrane as a helical span at residues 747–769 (EMLQVGNLVFTGIFTAEMTFKII). Topologically, residues 770–775 (ALDPYY) are cytoplasmic. A helical membrane pass occupies residues 776-796 (YFQQGWNIFDSIIVILSLMEL). Over 797 to 806 (GLSRMGNLSV) the chain is Extracellular. Asn803 carries an N-linked (GlcNAc...) asparagine glycan. The helical transmembrane segment at 807-821 (LRSFRLLRVFKLAKS) threads the bilayer. Over 822–838 (WPTLNTLIKIIGNSVGA) the chain is Cytoplasmic. A helical transmembrane segment spans residues 839–860 (LGNLTLVLAIIVFIFAVVGMQL). The Extracellular segment spans residues 861 to 886 (FGKNYSELRHRISDSGLLPRWHMMDF). Asn864 carries an N-linked (GlcNAc...) asparagine glycan. The pore-forming intramembrane region spans 887-905 (FHAFLIIFRILCGEWIETM). The Extracellular portion of the chain corresponds to 906-914 (WDCMEVSGQ). Residues Cys908 and Cys917 are joined by a disulfide bond. A helical transmembrane segment spans residues 915–943 (SLCLLVFLLVMVIGNLVVLNLFLALLLSS). Residues 944-1205 (FSADNLTAPD…LRKTCYRIVE (262 aa)) lie on the Cytoplasmic side of the membrane. The tract at residues 1000–1144 (HSQLPSCIAA…EDSYSEGSTA (145 aa)) is disordered. Residues 1017–1036 (EVEKAPPARKETRFEEDKRP) show a composition bias toward basic and acidic residues. Positions 1056–1075 (SDTDDQEEDEENSLGTEEEE) are enriched in acidic residues. Residues 1098 to 1115 (SQVSETTSSEAEASTSQA) are compositionally biased toward low complexity. An III repeat occupies 1189–1503 (PGKVWWRLRK…KKYYNAMKKL (315 aa)). The chain crosses the membrane as a helical span at residues 1206-1227 (HSWFETFIIFMILLSSGALAFE). At 1228–1238 (DIYLEERKTIK) the chain is on the extracellular side. The chain crosses the membrane as a helical span at residues 1239–1261 (VLLEYADKMFTYVFVLEMLLKWV). Residues 1262–1270 (AYGFKKYFT) lie on the Cytoplasmic side of the membrane. A helical membrane pass occupies residues 1271–1293 (NAWCWLDFLIVDVSLVSLVANTL). Residues 1294–1299 (GFAEMG) are Extracellular-facing. A helical transmembrane segment spans residues 1300-1319 (PIKSLRTLRALRPLRALSRF). Topologically, residues 1320 to 1332 (EGMRVVVNALVGA) are cytoplasmic. The helical transmembrane segment at 1333-1357 (IPSIMNVLLVCLIFWLIFSIMGVNL) threads the bilayer. Residues 1358–1402 (FAGKFGRCINQTEGDLPLNYTIVNNKSECESFNVTGELYWTKVKV) are Extracellular-facing. 4 N-linked (GlcNAc...) asparagine glycosylation sites follow: Asn1367, Asn1376, Asn1382, and Asn1390. An intramembrane region (pore-forming) is located at residues 1403–1424 (NFDNVGAGYLALLQVATFKGWM). The Extracellular portion of the chain corresponds to 1425-1447 (DIMYAAVDSRGYEEQPQWEDNLY). A helical transmembrane segment spans residues 1448–1472 (MYIYFVVFIIFGSFFTLNLFIGVII). At 1473–1530 (DNFNQQKKKLGGQDIFMTEEQKKYYNAMKKLGSKKPQKPIPRPLNKYQGFIFDIVTKQ) the chain is on the cytoplasmic side. Ser1505 is subject to Phosphoserine; by PKC. One copy of the IV repeat lies at 1512 to 1809 (IPRPLNKYQG…WEKFDPEATQ (298 aa)). The helical transmembrane segment at 1531-1549 (AFDVTIMFLICLNMVTMMV) threads the bilayer. Over 1550-1560 (ETDDQSPEKVN) the chain is Extracellular. Residues 1561–1582 (ILAKINLLFVAIFTGECIVKMA) traverse the membrane as a helical segment. At 1583 to 1591 (ALRHYYFTN) the chain is on the cytoplasmic side. A helical membrane pass occupies residues 1592–1614 (SWNIFDFVVVILSIVGTVLSDII). Over 1615 to 1621 (QKYFFSP) the chain is Extracellular. A helical membrane pass occupies residues 1622–1642 (TLFRVIRLARIGRILRLIRGA). The Cytoplasmic segment spans residues 1643–1652 (KGIRTLLFAL). The chain crosses the membrane as a helical span at residues 1653–1681 (MMSLPALFNIGLLLFLVMFIYSIFGMANF). Residues 1682–1699 (AYVKWEAGIDDMFNFQTF) lie on the Extracellular side of the membrane. The segment at residues 1700–1716 (ANSMLCLFQITTSAGWD) is an intramembrane region (pore-forming). The Extracellular portion of the chain corresponds to 1717 to 1747 (GLLSPILNTGPPYCDPNLPNSNGSRGNCGSP). A helical transmembrane segment spans residues 1748 to 1773 (AVGILFFTTYIIISFLIVVNMYIAII). Residues 1774-2019 (LENFSVATEE…SPDRDRESIV (246 aa)) lie on the Cytoplasmic side of the membrane. The tract at residues 1841 to 1903 (DLPMVSGDRI…ITTTLRRKHE (63 aa)) is interaction with FGF13. The 30-residue stretch at 1903–1932 (EEVSATVIQRAFRRHLLQRSVKHASFLFRQ) folds into the IQ domain. Low complexity predominate over residues 1963–1982 (SGPLSSSSISSTSFPPSYDS). Positions 1963-2019 (SGPLSSSSISSTSFPPSYDSVTRATSDNLPVRASDYSRSEDLADFPPSPDRDRESIV) are disordered. Residues 1977 to 1980 (PPSY) are interaction with NEDD4, NEDD4L and WWP2.

Belongs to the sodium channel (TC 1.A.1.10) family. Nav1.5/SCN5A subfamily. Cannot form the same regulatory interactions with beta subunits as other Navs do. Interacts with the PDZ domain of the syntrophin SNTA1, SNTB1 and SNTB2. Interacts with NEDD4, NEDD4L, WWP2 and GPD1L. Interacts with CALM. Interacts with FGF13; the interaction is direct and may regulate SNC5A density at membranes and function. Interacts with FGF12 and FGF14. Interacts with ANK3. Interacts with PKP2 (via N-terminus). Interacts with TMEM233. Interacts with XIRP2; the interaction is required for normal action potential configuration in the heart. Post-translationally, phosphorylation at Ser-1505 by PKC in a highly conserved cytoplasmic loop slows inactivation of the sodium channel and reduces peak sodium currents. Regulated through phosphorylation by CaMK2D. Ubiquitinated by NEDD4L; which promotes its endocytosis. Does not seem to be ubiquitinated by NEDD4 or WWP2. In terms of processing, lacks the cysteine which covalently binds the conotoxin GVIIJ. This cysteine (position 868) is speculated in other sodium channel subunits alpha to be implied in covalent binding with the sodium channel subunit beta-2 or beta-4. Post-translationally, N-glycosylated at Asn-318, probably hinders potential interaction with regulatory subunits. In terms of tissue distribution, expressed in the myocardium (at protein level).

The protein localises to the cell membrane. Its subcellular location is the cytoplasm. It is found in the perinuclear region. It localises to the sarcolemma. The protein resides in the T-tubule. The protein localises to the cell junction. It catalyses the reaction Na(+)(in) = Na(+)(out). Its activity is regulated as follows. Channel inactivation is regulated by intracellular calcium levels. It is a tetrodotoxin-resistant voltage-gated Na(+) channel (Nav). Its function is as follows. Pore-forming subunit of Nav1.5, a voltage-gated sodium (Nav) channel that directly mediates the depolarizing phase of action potentials in excitable membranes. Navs, also called VGSCs (voltage-gated sodium channels) or VDSCs (voltage-dependent sodium channels), operate by switching between closed and open conformations depending on the voltage difference across the membrane. In the open conformation they allow Na(+) ions to selectively pass through the pore, along their electrochemical gradient. The influx of Na(+) ions provokes membrane depolarization, initiating the propagation of electrical signals throughout cells and tissues. Nav1.5 is the predominant sodium channel expressed in myocardial cells and it is responsible for the initial upstroke of the action potential in cardiac myocytes, thereby initiating the heartbeat. Required for normal electrical conduction including formation of the infranodal ventricular conduction system and normal action potential configuration, as a result of its interaction with XIRP2. This Mus musculus (Mouse) protein is Sodium channel protein type 5 subunit alpha.